The following is a 228-amino-acid chain: Aquaporin Z 1 (228 aa).

A run of 2 helical transmembrane segments spans residues 9 to 29 (FLGTFWLVLGGCGSAVLAAAF) and 34 to 54 (IGLLGVSFAFGLTVLTMAYAV). Positions 63-65 (NPA) match the NPA 1 motif. Helical transmembrane passes span 82 to 102 (VGYILAQVTGAIAAAAVLYVI), 129 to 149 (LTAALVTEVVMTAFFLLIILG), and 156 to 176 (PVGFAPIAIGLGLTLIHLVSI). Residues 184–186 (NPA) carry the NPA 2 motif. Residues 204–224 (WLFWVAPLIGAVIAGIVWKIV) traverse the membrane as a helical segment.

The protein belongs to the MIP/aquaporin (TC 1.A.8) family. Homotetramer.

The protein localises to the cell inner membrane. It carries out the reaction H2O(in) = H2O(out). Its function is as follows. Channel that permits osmotically driven movement of water in both directions. It is involved in the osmoregulation and in the maintenance of cell turgor during volume expansion in rapidly growing cells. It mediates rapid entry or exit of water in response to abrupt changes in osmolarity. This chain is Aquaporin Z 1, found in Rhizobium meliloti (strain 1021) (Ensifer meliloti).